A 400-amino-acid polypeptide reads, in one-letter code: CCA-adding enzyme (400 aa).

2 residues coordinate ATP: Gly8 and Arg11. The CTP site is built by Gly8 and Arg11. Asp21 and Asp23 together coordinate Mg(2+). ATP contacts are provided by Arg91, Arg137, and Arg140. Residues Arg91, Arg137, and Arg140 each contribute to the CTP site. An HD domain is found at 217 to 322 (NFQYAMTALK…IDLFNKWDVW (106 aa)).

This sequence belongs to the tRNA nucleotidyltransferase/poly(A) polymerase family. Bacterial CCA-adding enzyme type 2 subfamily. Requires Mg(2+) as cofactor.

It catalyses the reaction a tRNA precursor + 2 CTP + ATP = a tRNA with a 3' CCA end + 3 diphosphate. The catalysed reaction is a tRNA with a 3' CCA end + 2 CTP + ATP = a tRNA with a 3' CCACCA end + 3 diphosphate. Catalyzes the addition and repair of the essential 3'-terminal CCA sequence in tRNAs without using a nucleic acid template. Adds these three nucleotides in the order of C, C, and A to the tRNA nucleotide-73, using CTP and ATP as substrates and producing inorganic pyrophosphate. tRNA 3'-terminal CCA addition is required both for tRNA processing and repair. Also involved in tRNA surveillance by mediating tandem CCA addition to generate a CCACCA at the 3' terminus of unstable tRNAs. While stable tRNAs receive only 3'-terminal CCA, unstable tRNAs are marked with CCACCA and rapidly degraded. The protein is CCA-adding enzyme of Actinobacillus succinogenes (strain ATCC 55618 / DSM 22257 / CCUG 43843 / 130Z).